We begin with the raw amino-acid sequence, 218 residues long: MGQKINPLGFRLGTTQSHHCLWFAQPKNYSGGLQEDEKIRDCIKNYVQKHMRVSSGFEGIARIGIQKKIDLIQVIIHIGFPHFLIEGRARGIEELQINVQKKLNSVNRRLNIAITRVAKPYGQPTILAEYIALQLKNRVSFRKAMKKAIELTEQADTKGIQVQISGRINGKEIARVEWIREGRVPLQTIRAKIDHCSYAVRTIYGVLGIKIWIFLDEE.

The region spanning 47-118 (VQKHMRVSSG…RLNIAITRVA (72 aa)) is the KH type-2 domain.

The protein belongs to the universal ribosomal protein uS3 family. As to quaternary structure, part of the 30S ribosomal subunit.

Its subcellular location is the plastid. It is found in the chloroplast. In Illicium oligandrum (Star anise), this protein is Small ribosomal subunit protein uS3c (rps3).